We begin with the raw amino-acid sequence, 569 residues long: Spermatogenesis-associated protein 16 (569 aa).

Over residues lysine 67–proline 92 the composition is skewed to basic and acidic residues. The disordered stretch occupies residues lysine 67–lysine 96.

Belongs to the SPATA16 family. Expressed in testis.

Its subcellular location is the golgi apparatus. It localises to the cytoplasmic vesicle. It is found in the secretory vesicle. The protein localises to the acrosome. In terms of biological role, essential for spermiogenesis and male fertility. Involved in the formation of sperm acrosome during spermatogenesis. The chain is Spermatogenesis-associated protein 16 (SPATA16) from Homo sapiens (Human).